We begin with the raw amino-acid sequence, 375 residues long: 23S rRNA (uracil(747)-C(5))-methyltransferase RlmC (375 aa).

Cysteine 3, cysteine 11, cysteine 14, and cysteine 87 together coordinate [4Fe-4S] cluster. S-adenosyl-L-methionine is bound by residues glutamine 212, phenylalanine 241, glutamate 262, and asparagine 307. The Nucleophile role is filled by cysteine 334.

The protein belongs to the class I-like SAM-binding methyltransferase superfamily. RNA M5U methyltransferase family. RlmC subfamily.

The enzyme catalyses uridine(747) in 23S rRNA + S-adenosyl-L-methionine = 5-methyluridine(747) in 23S rRNA + S-adenosyl-L-homocysteine + H(+). Catalyzes the formation of 5-methyl-uridine at position 747 (m5U747) in 23S rRNA. The sequence is that of 23S rRNA (uracil(747)-C(5))-methyltransferase RlmC from Escherichia coli (strain K12 / MC4100 / BW2952).